A 277-amino-acid polypeptide reads, in one-letter code: Acetyl-coenzyme A carboxylase carboxyl transferase subunit beta (277 aa).

In terms of domain architecture, CoA carboxyltransferase N-terminal spans 22 to 277 (LWTKCPGCNR…TLKQLLYFLT (256 aa)). The Zn(2+) site is built by Cys-26, Cys-29, Cys-45, and Cys-48. The C4-type zinc finger occupies 26 to 48 (CPGCNRFLYTKELELNQSVCHYC).

The protein belongs to the AccD/PCCB family. In terms of assembly, acetyl-CoA carboxylase is a heterohexamer composed of biotin carboxyl carrier protein (AccB), biotin carboxylase (AccC) and two subunits each of ACCase subunit alpha (AccA) and ACCase subunit beta (AccD). It depends on Zn(2+) as a cofactor.

The protein localises to the cytoplasm. The enzyme catalyses N(6)-carboxybiotinyl-L-lysyl-[protein] + acetyl-CoA = N(6)-biotinyl-L-lysyl-[protein] + malonyl-CoA. It functions in the pathway lipid metabolism; malonyl-CoA biosynthesis; malonyl-CoA from acetyl-CoA: step 1/1. Its function is as follows. Component of the acetyl coenzyme A carboxylase (ACC) complex. Biotin carboxylase (BC) catalyzes the carboxylation of biotin on its carrier protein (BCCP) and then the CO(2) group is transferred by the transcarboxylase to acetyl-CoA to form malonyl-CoA. This Methylacidiphilum infernorum (isolate V4) (Methylokorus infernorum (strain V4)) protein is Acetyl-coenzyme A carboxylase carboxyl transferase subunit beta.